The following is a 472-amino-acid chain: Deoxyribodipyrimidine photo-lyase (472 aa).

Positions 2–134 (TTHLVWFRQD…VCEGFDDSVI (133 aa)) constitute a Photolyase/cryptochrome alpha/beta domain. The (6R)-5,10-methylene-5,6,7,8-tetrahydrofolate site is built by Asn109 and Glu110. Tyr223 contacts FAD. Arg227 is a DNA binding site. FAD is bound by residues 235-239 (TSRLS), Trp272, and 275-282 (ELIWREFY). Interaction with DNA regions lie at residues 275 to 282 (ELIWREFY) and 342 to 343 (NR). Position 373-375 (373-375 (DGD)) interacts with FAD. Gln405 is a binding site for DNA.

It belongs to the DNA photolyase class-1 family. Monomer. It depends on FAD as a cofactor. (6R)-5,10-methylene-5,6,7,8-tetrahydrofolate is required as a cofactor.

It carries out the reaction cyclobutadipyrimidine (in DNA) = 2 pyrimidine residues (in DNA).. Its function is as follows. Involved in repair of UV radiation-induced DNA damage. Catalyzes the light-dependent monomerization (300-600 nm) of cyclobutyl pyrimidine dimers (in cis-syn configuration), which are formed between adjacent bases on the same DNA strand upon exposure to ultraviolet radiation. This Escherichia coli (strain K12) protein is Deoxyribodipyrimidine photo-lyase (phrB).